Reading from the N-terminus, the 98-residue chain is UPF0473 protein GTNG_2486 (98 aa).

Belongs to the UPF0473 family.

This chain is UPF0473 protein GTNG_2486, found in Geobacillus thermodenitrificans (strain NG80-2).